Reading from the N-terminus, the 91-residue chain is MARMVHCIKLNKEAEGLDFPPLPGDLGKKIWQNVSKEAWAGWLKHQTMLINENRLNMADPRARQYLIKQTEKYFFGDGADQAAGYVPPPAA.

This sequence belongs to the Fe(2+)-trafficking protein family.

Could be a mediator in iron transactions between iron acquisition and iron-requiring processes, such as synthesis and/or repair of Fe-S clusters in biosynthetic enzymes. The protein is Probable Fe(2+)-trafficking protein of Cupriavidus metallidurans (strain ATCC 43123 / DSM 2839 / NBRC 102507 / CH34) (Ralstonia metallidurans).